The primary structure comprises 416 residues: Serine hydroxymethyltransferase (416 aa).

(6S)-5,6,7,8-tetrahydrofolate is bound by residues Leu121 and 125–127; that span reads GHL. An N6-(pyridoxal phosphate)lysine modification is found at Lys230.

It belongs to the SHMT family. Homodimer. Pyridoxal 5'-phosphate is required as a cofactor.

It is found in the cytoplasm. It catalyses the reaction (6R)-5,10-methylene-5,6,7,8-tetrahydrofolate + glycine + H2O = (6S)-5,6,7,8-tetrahydrofolate + L-serine. The protein operates within one-carbon metabolism; tetrahydrofolate interconversion. It participates in amino-acid biosynthesis; glycine biosynthesis; glycine from L-serine: step 1/1. In terms of biological role, catalyzes the reversible interconversion of serine and glycine with tetrahydrofolate (THF) serving as the one-carbon carrier. This reaction serves as the major source of one-carbon groups required for the biosynthesis of purines, thymidylate, methionine, and other important biomolecules. Also exhibits THF-independent aldolase activity toward beta-hydroxyamino acids, producing glycine and aldehydes, via a retro-aldol mechanism. The polypeptide is Serine hydroxymethyltransferase (Nitrosospira multiformis (strain ATCC 25196 / NCIMB 11849 / C 71)).